We begin with the raw amino-acid sequence, 104 residues long: Large ribosomal subunit protein uL24 (104 aa).

It belongs to the universal ribosomal protein uL24 family. In terms of assembly, part of the 50S ribosomal subunit.

One of two assembly initiator proteins, it binds directly to the 5'-end of the 23S rRNA, where it nucleates assembly of the 50S subunit. In terms of biological role, one of the proteins that surrounds the polypeptide exit tunnel on the outside of the subunit. The chain is Large ribosomal subunit protein uL24 from Anaplasma phagocytophilum (strain HZ).